A 203-amino-acid chain; its full sequence is Ribonuclease HII (203 aa).

An RNase H type-2 domain is found at 18-203 (GHYAGVDEVG…SFRPVREALA (186 aa)). Residues Asp-24, Glu-25, and Asp-116 each coordinate a divalent metal cation.

This sequence belongs to the RNase HII family. The cofactor is Mn(2+). It depends on Mg(2+) as a cofactor.

It localises to the cytoplasm. The catalysed reaction is Endonucleolytic cleavage to 5'-phosphomonoester.. Functionally, endonuclease that specifically degrades the RNA of RNA-DNA hybrids. The chain is Ribonuclease HII from Shewanella halifaxensis (strain HAW-EB4).